We begin with the raw amino-acid sequence, 195 residues long: Obelin (195 aa).

A propeptide spanning residues 1 to 6 is cleaved from the precursor; that stretch reads MASKYA. EF-hand domains lie at 17–52, 53–88, 110–145, and 146–181; these read KWIK…DICK, NLGA…FPEF, LIRE…SGIS, and PSEE…FWYT. Residues Asp-30, Asn-32, Asn-34, Gln-36, and Glu-41 each contribute to the Ca(2+) site. Asp-123, Asp-125, Ser-127, Thr-129, Glu-134, Asp-159, Asp-161, Ser-163, Glu-165, and Glu-170 together coordinate Ca(2+).

This sequence belongs to the aequorin family.

Ca(2+)-dependent bioluminescence photoprotein. Displays an emission peak at 495 nm (blue light). Trace amounts of calcium ion trigger the intramolecular oxidation of the chromophore, coelenterazine into coelenteramide and CO(2) with the concomitant emission of light. This chain is Obelin, found in Obelia geniculata (Knotted thread hydroid).